The sequence spans 548 residues: Folylpolyglutamate synthase (548 aa).

130 to 133 provides a ligand contact to ATP; sequence GKGS. Residues Ser157, Glu234, and His262 each coordinate Mg(2+). The ATP site is built by Arg382 and Asp396.

Belongs to the folylpolyglutamate synthase family. The cofactor is a monovalent cation.

Its subcellular location is the mitochondrion inner membrane. It localises to the mitochondrion matrix. The protein resides in the cytoplasm. The enzyme catalyses (6S)-5,6,7,8-tetrahydrofolyl-(gamma-L-Glu)(n) + L-glutamate + ATP = (6S)-5,6,7,8-tetrahydrofolyl-(gamma-L-Glu)(n+1) + ADP + phosphate + H(+). Its pathway is cofactor biosynthesis; tetrahydrofolylpolyglutamate biosynthesis. Catalyzes conversion of folates to polyglutamate derivatives allowing concentration of folate compounds in the cell and the intracellular retention of these cofactors, which are important substrates for most of the folate-dependent enzymes that are involved in one-carbon transfer reactions involved in purine, pyrimidine and amino acid synthesis. Required for methionine synthesis and maintenance of intact mitochondrial DNA. Involved in telomere maintenance. The polypeptide is Folylpolyglutamate synthase (Saccharomyces cerevisiae (strain FostersO) (Baker's yeast)).